Consider the following 271-residue polypeptide: DNA repair protein RecO (271 aa).

The segment at 248 to 271 (AVGVEDSVRQDGDRDSTTRTPSSA) is disordered. Residues 253–264 (DSVRQDGDRDST) show a composition bias toward basic and acidic residues.

The protein belongs to the RecO family.

In terms of biological role, involved in DNA repair and RecF pathway recombination. In Rhodococcus opacus (strain B4), this protein is DNA repair protein RecO.